Here is a 227-residue protein sequence, read N- to C-terminus: 4'-phosphopantetheinyl transferase PptT (227 aa).

Residues Arg48, Arg56, 75–78 (KGDK), 92–93 (TH), and Asp114 each bind CoA. Asp114, Ala115, and Glu116 together coordinate Mg(2+). CoA is bound by residues Glu157, Lys161, and Leu171.

Belongs to the P-Pant transferase superfamily. It depends on Mg(2+) as a cofactor.

The enzyme catalyses apo-[ACP] + CoA = holo-[ACP] + adenosine 3',5'-bisphosphate + H(+). Its activity is regulated as follows. Inhibited by the amidino-urea compound 1-[(2,6-diethylphenyl)-3-N-ethylcarbamimodoyl]urea (compound 8918). It acts by binding to the phosphopantetheine pocket in the active site. Inhibition by compound 8918 kills M.tuberculosis. Its function is as follows. Transfers the 4'-phosphopantetheine moiety from coenzyme A to a Ser of acyl-carrier-protein. Involved in post-translational modification of various type-I polyketide synthases required for the formation of both mycolic acids and lipid virulence factors. Acts on Pks13, Mas, PpsA, PpsB, PpsC and PpsD. Also acts on AcpM, the meromycolate extension acyl carrier protein. In addition, is involved in the activation of the acyl carrier protein MbtL and the nonribosomal peptides synthases MbtB and MbtE, which are involved in the biosynthesis of the siderophore mycobactin. In terms of biological role, required for the replication and survival of Mycobacterium during the acute and chronic phases of infection in mice. This Mycobacterium tuberculosis (strain ATCC 25618 / H37Rv) protein is 4'-phosphopantetheinyl transferase PptT.